The chain runs to 147 residues: Hemoglobin subunit deltaH (147 aa).

In terms of domain architecture, Globin spans 3–147 (RLTDSEKAEV…MANALAHKYH (145 aa)). Positions 64 and 93 each coordinate heme b.

It belongs to the globin family. As to quaternary structure, heterotetramer of two delta chains and two alpha chains. In terms of tissue distribution, red blood cells.

This is Hemoglobin subunit deltaH (HBD) from Dendrohyrax dorsalis (Beecroft's tree hyrax).